The primary structure comprises 1682 residues: Sodium channel protein type 7 subunit alpha (1682 aa).

Over 1–117 the chain is Cytoplasmic; that stretch reads MLASPEPKGL…RRTTIKVLVH (117 aa). One copy of the I repeat lies at 100 to 401; it reads TLSPFNCIRR…ILAMAYEEEK (302 aa). A helical transmembrane segment spans residues 118 to 137; sequence PFFQLFILISVLIDCVFMSL. At 138–141 the chain is on the extracellular side; that stretch reads TNLP. Residues 142 to 167 traverse the membrane as a helical segment; the sequence is KWRPVLENTLLGIYTFEILVKLFARG. Topologically, residues 168 to 178 are cytoplasmic; that stretch reads VWAGSFSFLGD. Residues 179 to 196 traverse the membrane as a helical segment; the sequence is PWNWLDFSVTVFEVIIRY. Topologically, residues 197-200 are extracellular; it reads SPLD. Residues 201–219 form a helical membrane-spanning segment; it reads FIPTLQTARTLRILKIIPL. The Cytoplasmic segment spans residues 220 to 237; it reads NQGLKSLVGVLIHCLKQL. The helical transmembrane segment at 238-259 threads the bilayer; it reads IGVIILTLFFLSIFSLIGMGLF. Residues 260 to 338 lie on the Extracellular side of the membrane; sequence MGNLKHKCFR…PDQGFTNFDS (79 aa). Cys267 and Cys307 are oxidised to a cystine. N-linked (GlcNAc...) asparagine glycans are attached at residues Asn276, Asn281, and Asn309. The segment at residues 339–366 is an intramembrane region (pore-forming); the sequence is FGWALFALFRLMAQDYPEVLYHQILYAS. Residue Gly367 is a topological domain, extracellular. The helical transmembrane segment at 368–407 threads the bilayer; that stretch reads KVYMIFFVVVSFLFSFYMASLFLGILAMAYEEEKQRVGEI. Residues 408–505 lie on the Cytoplasmic side of the membrane; sequence SKKIEPKFQQ…EFVHRIIMAP (98 aa). At Ser442 the chain carries Phosphoserine; by PKA. An II repeat occupies 487-758; the sequence is CSPCWLKLKE…QLAVARIKKG (272 aa). Residues 506–521 traverse the membrane as a helical segment; that stretch reads FTDLFLIICIILNVCF. Residues 522 to 530 lie on the Extracellular side of the membrane; it reads LTLEHYPMS. A helical transmembrane segment spans residues 531-559; the sequence is KQTNTLLNIGNLVFIGIFTAEMIFKIIAM. Over 560–568 the chain is Cytoplasmic; sequence HPYGYFQVG. A helical transmembrane segment spans residues 569–586; it reads WNIFDSMIVFHGLIELCL. Topologically, residues 587-592 are extracellular; that stretch reads ANVAGM. A helical transmembrane segment spans residues 593–609; the sequence is ALLRLFRMLRIFKLGKY. Over 610-626 the chain is Cytoplasmic; it reads WPTFQILMWSLSNSWVA. A helical membrane pass occupies residues 627–655; that stretch reads LKDLVLLLFTFIFFSAAFGMKLFGKNYEE. Topologically, residues 656–673 are extracellular; the sequence is FVCHIDKDCQLPRWHMHD. Disulfide bonds link Cys658–Cys664 and Cys696–Cys705. The pore-forming intramembrane region spans 674 to 700; it reads FFHSFLNVFRILCGEWVETLWDCMEVA. A topological domain (extracellular) is located at residue Gly701. A helical transmembrane segment spans residues 702–732; the sequence is QSWCIPFYLMVILIGNLLVLYLFLALVSSFS. At 733-934 the chain is on the cytoplasmic side; it reads SCKDVTAEEN…KTCCKIVENN (202 aa). The residue at position 777 (Thr777) is a Phosphothreonine; by PKA. Residues 801–871 are disordered; that stretch reads TQDFLKDKEK…SKEKIKQSSS (71 aa). The span at 804–819 shows a compositional bias: basic and acidic residues; sequence FLKDKEKSSGTEKNAT. Residues 820–834 are compositionally biased toward polar residues; the sequence is ENESQSLIPSPSVSE. Position 843 is a phosphoserine (Ser843). 2 positions are modified to phosphoserine; by PKA: Ser869 and Ser905. The III repeat unit spans residues 916-1224; sequence KGKIWQNIRK…RKQYRRLKKL (309 aa). The chain crosses the membrane as a helical span at residues 935-953; sequence WFKCFIGLVTLLSTGTLAF. Residues 954–961 lie on the Extracellular side of the membrane; sequence EDIYMDQR. A helical transmembrane segment spans residues 962–990; that stretch reads KTIKILLEYADMIFTYIFILEMLLKWMAY. The Cytoplasmic segment spans residues 991 to 998; it reads GFKAYFSN. The helical transmembrane segment at 999–1020 threads the bilayer; it reads GWYRLDFVVVIVFCLSLIGKTR. Residue Glu1021 is a topological domain, extracellular. A helical transmembrane segment spans residues 1022–1040; sequence ELKPLISMKFLRPLRVLSQ. The Cytoplasmic portion of the chain corresponds to 1041-1055; that stretch reads FERMKVVVRALIKTT. A helical transmembrane segment spans residues 1056–1080; the sequence is LPTLNVFLVCLMIWLIFSIMGVDLF. Over 1081 to 1127 the chain is Extracellular; that stretch reads AGRFYECIDPTSGERFPSSEVMNKSRCESLLFNESMLWENAKMNFDN. Residues Cys1087 and Cys1107 are joined by a disulfide bond. Asn1103 and Asn1113 each carry an N-linked (GlcNAc...) asparagine glycan. Residues 1128–1154 constitute an intramembrane region (pore-forming); it reads VGNGFLSLLQVATFNGWITIMNSAIDS. The Extracellular segment spans residues 1155 to 1167; that stretch reads VAVNIQPHFEVNI. A helical membrane pass occupies residues 1168–1202; that stretch reads YMYCYFINFIIFGVFLPLSMLITVIIDNFNKHKIK. The Cytoplasmic segment spans residues 1203-1250; it reads LGGSNIFITVKQRKQYRRLKKLMYEDSQRPVPRPLNKLQGFIFDVVTS. Residues 1233-1531 form an IV repeat; it reads VPRPLNKLQG…WKRFDPDRTQ (299 aa). Residues 1251–1272 form a helical membrane-spanning segment; sequence QAFNVIVMVLICFQAIAMMIDT. The Extracellular segment spans residues 1273–1276; that stretch reads DVQS. Residues 1277-1305 traverse the membrane as a helical segment; sequence LQMSIALYWINSIFVMLYTMECILKLIAF. Topologically, residues 1306–1312 are cytoplasmic; it reads RCFYFTI. A helical membrane pass occupies residues 1313–1338; sequence AWNIFDFMVVIFSITGLCLPMTVGSY. Topologically, residues 1339–1341 are extracellular; that stretch reads LVP. Residues 1342-1362 traverse the membrane as a helical segment; it reads PSLVQLILLSRIIHMLRLGKG. Over 1363–1377 the chain is Cytoplasmic; that stretch reads PKVFHNLMLPLMLSL. The chain crosses the membrane as a helical span at residues 1378-1402; sequence PALLNIILLIFLVMFIYAVFGMYNF. Over 1403 to 1420 the chain is Extracellular; it reads AYVKKEAGINDVSNFETF. The pore-forming intramembrane region spans 1421-1444; it reads GNSMLCLFQVAIFAGWDGMLDAIF. Over 1445-1468 the chain is Extracellular; sequence NSKWSDCDPDKINPGTQVRGDCGN. Cys1451 and Cys1466 are disulfide-bonded. The chain crosses the membrane as a helical span at residues 1469-1504; it reads PSVGIFYFVSYILISWLIIVNMYIVVVMEFLNIASK. Topologically, residues 1505-1682 are cytoplasmic; that stretch reads KKNKTLSEDD…KEKSPIQSQI (178 aa).

Belongs to the sodium channel (TC 1.A.1.10) family. SCN7A subfamily. The sodium channel formed by SCN7A is probably a heterooligomeric complex consisting of the ion conducting pore forming alpha subunit SCN7A and regulatory beta subunits such as SCN3B. Interacts with ATP1A1; activates ATP1A1 and thereby indirectly signals to nearby neurons to regulate sodium homeostasis. Heart and uterus.

Its subcellular location is the cell membrane. It carries out the reaction Na(+)(in) = Na(+)(out). In terms of biological role, sodium leak channel functioning as an osmosensor regulating sodium ion levels in various tissues and organs. While most sodium channels are voltage-gated, SCN7A is not and lets sodium flow through membrane along its concentration gradient. In glial cells of the central nervous system, senses body-fluid sodium levels and controls salt intake behavior as well as voluntary water intake through activation of nearby neurons to maintain appropriate sodium levels in the body. By mediating sodium influx into keratinocytes, also plays a role in skin barrier homeostasis. The polypeptide is Sodium channel protein type 7 subunit alpha (Homo sapiens (Human)).